The primary structure comprises 438 residues: Chromosomal replication initiator protein DnaA (438 aa).

The domain I, interacts with DnaA modulators stretch occupies residues 1 to 71 (MTELDSLWEA…VEIVYQRTGQ (71 aa)). A domain II region spans residues 71 to 101 (QEIRPDYVLATDPTPLAQTPPRPQSTFKEET). The interval 81–100 (TDPTPLAQTPPRPQSTFKEE) is disordered. Residues 102–318 (PLNPEYTFQT…GALMRIRVFS (217 aa)) form a domain III, AAA+ region region. The ATP site is built by G146, G148, K149, and T150. The tract at residues 319 to 438 (ELHQQPITLK…LVKLKNDLQA (120 aa)) is domain IV, binds dsDNA.

The protein belongs to the DnaA family. Oligomerizes as a right-handed, spiral filament on DNA at oriC.

Its subcellular location is the cytoplasm. Plays an essential role in the initiation and regulation of chromosomal replication. ATP-DnaA binds to the origin of replication (oriC) to initiate formation of the DNA replication initiation complex once per cell cycle. Binds the DnaA box (a 9 base pair repeat at the origin) and separates the double-stranded (ds)DNA. Forms a right-handed helical filament on oriC DNA; dsDNA binds to the exterior of the filament while single-stranded (ss)DNA is stabiized in the filament's interior. The ATP-DnaA-oriC complex binds and stabilizes one strand of the AT-rich DNA unwinding element (DUE), permitting loading of DNA polymerase. After initiation quickly degrades to an ADP-DnaA complex that is not apt for DNA replication. Binds acidic phospholipids. This Limosilactobacillus fermentum (strain NBRC 3956 / LMG 18251) (Lactobacillus fermentum) protein is Chromosomal replication initiator protein DnaA.